The chain runs to 165 residues: Large ribosomal subunit protein uL15 (165 aa).

Residues 1–44 (MSLNQLKAPRGANRAKKRVGRGQGSGLGKTAGRGGKGQKARSGN) form a disordered region. Residues 21–37 (RGQGSGLGKTAGRGGKG) show a composition bias toward gly residues.

It belongs to the universal ribosomal protein uL15 family. As to quaternary structure, part of the 50S ribosomal subunit.

Functionally, binds to the 23S rRNA. The protein is Large ribosomal subunit protein uL15 of Anaeromyxobacter dehalogenans (strain 2CP-C).